The following is a 387-amino-acid chain: Acetylserotonin O-methyltransferase (387 aa).

S-adenosyl-L-methionine contacts are provided by residues Y153, W170, E216, 246–248, and R263; that span reads GDF. Catalysis depends on H266, which acts as the Proton donor/acceptor. Residues D267 and Q317 each contribute to the substrate site. The tract at residues 354–387 is disordered; that stretch reads AARGGGAGARSDGGGGDATSQTGSGTGSEVGAQD. Residues 356–370 are compositionally biased toward gly residues; that stretch reads RGGGAGARSDGGGGD.

Belongs to the class I-like SAM-binding methyltransferase superfamily. Cation-independent O-methyltransferase family. As to quaternary structure, homodimer. Expressed predominantly in the pineal gland (at protein level). Very low expression, if any, in the retina.

The enzyme catalyses N-acetylserotonin + S-adenosyl-L-methionine = melatonin + S-adenosyl-L-homocysteine + H(+). It functions in the pathway aromatic compound metabolism; melatonin biosynthesis; melatonin from serotonin: step 1/2. Its function is as follows. Catalyzes the transfer of a methyl group onto N-acetylserotonin, producing melatonin (N-acetyl-5-methoxytryptamine). The sequence is that of Acetylserotonin O-methyltransferase (Asmt) from Mus musculus (Mouse).